We begin with the raw amino-acid sequence, 183 residues long: Ribosome maturation factor RimM (183 aa).

The PRC barrel domain maps to 104-183 (EGDYYWKDLI…TIEVDWDPGF (80 aa)).

Belongs to the RimM family. In terms of assembly, binds ribosomal protein uS19.

Its subcellular location is the cytoplasm. Its function is as follows. An accessory protein needed during the final step in the assembly of 30S ribosomal subunit, possibly for assembly of the head region. Essential for efficient processing of 16S rRNA. May be needed both before and after RbfA during the maturation of 16S rRNA. It has affinity for free ribosomal 30S subunits but not for 70S ribosomes. The polypeptide is Ribosome maturation factor RimM (Cronobacter sakazakii (strain ATCC BAA-894) (Enterobacter sakazakii)).